Consider the following 307-residue polypeptide: N-acetylmuramic acid 6-phosphate etherase (307 aa).

The 164-residue stretch at 62 to 225 (IVLAFQKGAR…TTASMIRIGK (164 aa)) folds into the SIS domain. Residue Glu-90 is the Proton donor of the active site. Residue Glu-121 is part of the active site.

This sequence belongs to the GCKR-like family. MurNAc-6-P etherase subfamily. In terms of assembly, homodimer.

It carries out the reaction N-acetyl-D-muramate 6-phosphate + H2O = N-acetyl-D-glucosamine 6-phosphate + (R)-lactate. Its pathway is amino-sugar metabolism; 1,6-anhydro-N-acetylmuramate degradation. It functions in the pathway amino-sugar metabolism; N-acetylmuramate degradation. The protein operates within cell wall biogenesis; peptidoglycan recycling. In terms of biological role, specifically catalyzes the cleavage of the D-lactyl ether substituent of MurNAc 6-phosphate, producing GlcNAc 6-phosphate and D-lactate. Together with AnmK, is also required for the utilization of anhydro-N-acetylmuramic acid (anhMurNAc) either imported from the medium or derived from its own cell wall murein, and thus plays a role in cell wall recycling. In Mesorhizobium japonicum (strain LMG 29417 / CECT 9101 / MAFF 303099) (Mesorhizobium loti (strain MAFF 303099)), this protein is N-acetylmuramic acid 6-phosphate etherase.